The primary structure comprises 349 residues: UDP-3-O-acylglucosamine N-acyltransferase (349 aa).

The Proton acceptor role is filled by His-246.

This sequence belongs to the transferase hexapeptide repeat family. LpxD subfamily. In terms of assembly, homotrimer.

It catalyses the reaction a UDP-3-O-[(3R)-3-hydroxyacyl]-alpha-D-glucosamine + a (3R)-hydroxyacyl-[ACP] = a UDP-2-N,3-O-bis[(3R)-3-hydroxyacyl]-alpha-D-glucosamine + holo-[ACP] + H(+). It participates in bacterial outer membrane biogenesis; LPS lipid A biosynthesis. Functionally, catalyzes the N-acylation of UDP-3-O-acylglucosamine using 3-hydroxyacyl-ACP as the acyl donor. Is involved in the biosynthesis of lipid A, a phosphorylated glycolipid that anchors the lipopolysaccharide to the outer membrane of the cell. This Protochlamydia amoebophila (strain UWE25) protein is UDP-3-O-acylglucosamine N-acyltransferase.